The sequence spans 88 residues: Small ribosomal subunit protein uS15 (88 aa).

The protein belongs to the universal ribosomal protein uS15 family. In terms of assembly, part of the 30S ribosomal subunit. Forms a bridge to the 50S subunit in the 70S ribosome, contacting the 23S rRNA.

Functionally, one of the primary rRNA binding proteins, it binds directly to 16S rRNA where it helps nucleate assembly of the platform of the 30S subunit by binding and bridging several RNA helices of the 16S rRNA. Its function is as follows. Forms an intersubunit bridge (bridge B4) with the 23S rRNA of the 50S subunit in the ribosome. The chain is Small ribosomal subunit protein uS15 from Thermoanaerobacter pseudethanolicus (strain ATCC 33223 / 39E) (Clostridium thermohydrosulfuricum).